A 444-amino-acid polypeptide reads, in one-letter code: Protein cereblon (444 aa).

Positions 1–52 (MAGEGDPEDAAHNMGNHLPLLPAEEEEEDEIEMEVEDQDNKEPKKPNIINFD) are disordered. Over residues 23 to 37 (AEEEEEDEIEMEVED) the composition is skewed to acidic residues. Residues 80–321 (CPVIPVLPQV…CELDIMNKCT (242 aa)) form the Lon N-terminal domain. Residues 320–428 (CTSLCCKQCQ…LTRSALLPTI (109 aa)) enclose the CULT domain. Zn(2+) contacts are provided by Cys325 and Cys328. Positions 380, 382, and 388 each coordinate (S)-thalidomide. Positions 393 and 396 each coordinate Zn(2+).

This sequence belongs to the CRBN family. As to quaternary structure, component of a DCX (DDB1-CUL4-X-box) protein ligase complex, at least composed of CRBN, CUL4A, DDB1 and RBX1. Interacts directly with DDB1. Interacts with KCNT1. Interacts with ILF2. Interacts with TRAF6 and ECSIT. Post-translationally, ubiquitinated, ubiquitination is mediated by its own DCX protein ligase complex.

It is found in the cytoplasm. Its subcellular location is the nucleus. The protein localises to the membrane. It functions in the pathway protein modification; protein ubiquitination. Substrate recognition component of a DCX (DDB1-CUL4-X-box) E3 protein ligase complex that mediates the ubiquitination and subsequent proteasomal degradation of target proteins, such as MEIS2, ILF2 or GLUL. Normal degradation of key regulatory proteins is required for normal limb outgrowth and expression of the fibroblast growth factor FGF8. Maintains presynaptic glutamate release and consequently cognitive functions, such as memory and learning, by negatively regulating large-conductance calcium-activated potassium (BK) channels in excitatory neurons. Likely to function by regulating the assembly and neuronal surface expression of BK channels via its interaction with KCNT1. May also be involved in regulating anxiety-like behaviors via a BK channel-independent mechanism. Plays a negative role in TLR4 signaling by interacting with TRAF6 and ECSIT, leading to inhibition of ECSIT ubiquitination, an important step of the signaling. The sequence is that of Protein cereblon (CRBN) from Bos taurus (Bovine).